Here is a 551-residue protein sequence, read N- to C-terminus: Cation/acetate symporter ActP (551 aa).

14 consecutive transmembrane segments (helical) span residues 8–28, 35–55, 78–98, 105–125, 151–171, 185–205, 208–228, 264–284, 305–325, 357–377, 406–426, 430–450, 465–485, and 496–516; these read ALAA…TGAV, WQAI…TYWA, GLAI…SALV, GLIY…LIAE, LSAC…MVGA, VAVV…GMLA, WVQI…AFMV, ISAL…PHIL, GFMG…IMLV, LFLG…VAGL, VSKI…ILFE, IAFM…PIIL, VGGW…PTIW, and FPYE…IWVF.

It belongs to the sodium:solute symporter (SSF) (TC 2.A.21) family.

The protein resides in the cell inner membrane. Functionally, transports acetate. This is Cation/acetate symporter ActP from Klebsiella pneumoniae (strain 342).